A 489-amino-acid polypeptide reads, in one-letter code: Cytochrome P450 monooxygenase prhB (489 aa).

3 helical membrane passes run 1-21 (MFSF…KVIY), 212-232 (VIFQ…MIFA), and 287-307 (LFIG…AYLL). N347 and N379 each carry an N-linked (GlcNAc...) asparagine glycan. Residue C431 coordinates heme.

Belongs to the cytochrome P450 family. Heme serves as cofactor.

The protein localises to the membrane. It participates in secondary metabolite biosynthesis; terpenoid biosynthesis. In terms of biological role, cytochrome P450 monooxygenase; part of the gene cluster that mediates the biosynthesis of paraherquonin, a meroterpenoid with a unique, highly congested hexacyclic molecular architecture. The first step of the pathway is the synthesis of 3,5-dimethylorsellinic acid (DMOA) by the polyketide synthase prhL. Synthesis of DMOA is followed by farnesylation by the prenyltransferase prhE, methylesterification by the methyl-transferase prhM, epoxidation of the prenyl chain by the flavin-dependent monooxygenase prhF, and cyclization of the farnesyl moiety by the terpene cyclase prhH, to yield the tetracyclic intermediate, protoaustinoid A. The short chain dehydrogenase prhI then oxidizes the C-3 alcohol group of the terpene cyclase product to transform protoaustinoid A into protoaustinoid B. The FAD-binding monooxygenase prhJ catalyzes the oxidation of protoaustinoid B into preaustinoid A which is further oxidized into preaustinoid A1 by FAD-binding monooxygenase phrK. Finally, prhA leads to berkeleydione via the berkeleyone B intermediate. PrhA is a multifunctional dioxygenase that first desaturates at C5-C6 to form berkeleyone B, followed by rearrangement of the A/B-ring to form the cycloheptadiene moiety in berkeleydione. Berkeleydione serves as the key intermediate for the biosynthesis of paraherquonin as well as many other meroterpenoids. The cytochrome P450 monooxygenases prhB, prhD, and prhN, as well as the isomerase prhC, are probably involved in the late stage of paraherquonin biosynthesis, after the production of berkeleydione. Especially prhC might be a multifunctional enzyme that catalyzes the D-ring expansion via intramolecular methoxy rearrangement, as well as the hydrolysis of the expanded D-ring. This chain is Cytochrome P450 monooxygenase prhB, found in Penicillium brasilianum.